The chain runs to 107 residues: uncharacterized protein (107 aa).

This is an uncharacterized protein from Schizosaccharomyces pombe (strain 972 / ATCC 24843) (Fission yeast).